We begin with the raw amino-acid sequence, 393 residues long: Elongation factor Tu (393 aa).

The tr-type G domain occupies 10 to 203 (KPHVNIGTIG…AVDEFIPEPV (194 aa)). The interval 19 to 26 (GHVDHGKT) is G1. GTP is bound at residue 19–26 (GHVDHGKT). A Mg(2+)-binding site is contributed by T26. Residues 60–64 (GITIS) are G2. A G3 region spans residues 81–84 (DCPG). GTP is bound by residues 81-85 (DCPGH) and 136-139 (NKVD). Positions 136–139 (NKVD) are G4. The tract at residues 173 to 175 (SAL) is G5.

This sequence belongs to the TRAFAC class translation factor GTPase superfamily. Classic translation factor GTPase family. EF-Tu/EF-1A subfamily. Monomer.

The protein resides in the cytoplasm. It catalyses the reaction GTP + H2O = GDP + phosphate + H(+). Its function is as follows. GTP hydrolase that promotes the GTP-dependent binding of aminoacyl-tRNA to the A-site of ribosomes during protein biosynthesis. This chain is Elongation factor Tu, found in Chlorobium limicola (strain DSM 245 / NBRC 103803 / 6330).